We begin with the raw amino-acid sequence, 179 residues long: MSRIGKQPVPVPAGVDVNIDGQNISVKGSKGTLELTVSEPISVSRNDDGAIVVTRPDDERRNRSLHGLSRTLIANLVTGVTQGYTTKMEIFGVGYRVVAKGSNLEFALGYSHPVLIEAPEGITFAVETPTKFSISGIDKQKVGQISANIRRLRRPDPYKGKGIRYEGEQIRRKVGKTGK.

This sequence belongs to the universal ribosomal protein uL6 family. Part of the 50S ribosomal subunit.

Functionally, this protein binds to the 23S rRNA, and is important in its secondary structure. It is located near the subunit interface in the base of the L7/L12 stalk, and near the tRNA binding site of the peptidyltransferase center. The protein is Large ribosomal subunit protein uL6 of Mycobacteroides abscessus (strain ATCC 19977 / DSM 44196 / CCUG 20993 / CIP 104536 / JCM 13569 / NCTC 13031 / TMC 1543 / L948) (Mycobacterium abscessus).